A 422-amino-acid polypeptide reads, in one-letter code: Elongation factor 1-alpha (422 aa).

Residues 5–221 (KPHQNLAVIG…NDLPEPQPPT (217 aa)) enclose the tr-type G domain. A G1 region spans residues 14–21 (GHVDHGKS). 14 to 21 (GHVDHGKS) serves as a coordination point for GTP. Ser-21 provides a ligand contact to Mg(2+). Residues 70–74 (GVTID) form a G2 region. Residues 91–94 (DCPG) form a G3 region. GTP-binding positions include 91 to 95 (DCPGH) and 146 to 149 (NKMD). A G4 region spans residues 146–149 (NKMD). A G5 region spans residues 185–187 (SAF).

This sequence belongs to the TRAFAC class translation factor GTPase superfamily. Classic translation factor GTPase family. EF-Tu/EF-1A subfamily.

It localises to the cytoplasm. It catalyses the reaction GTP + H2O = GDP + phosphate + H(+). Its function is as follows. GTP hydrolase that promotes the GTP-dependent binding of aminoacyl-tRNA to the A-site of ribosomes during protein biosynthesis. The sequence is that of Elongation factor 1-alpha from Natronomonas pharaonis (strain ATCC 35678 / DSM 2160 / CIP 103997 / JCM 8858 / NBRC 14720 / NCIMB 2260 / Gabara) (Halobacterium pharaonis).